We begin with the raw amino-acid sequence, 479 residues long: ATP-dependent RNA helicase DbpA (479 aa).

Positions S2–Q30 match the Q motif motif. The Helicase ATP-binding domain occupies I33 to I203. S46–T53 lines the ATP pocket. The DEAD box motif lies at D151–D154. A Helicase C-terminal domain is found at N214–V374. The segment at M404–K479 is involved in 23S rRNA binding.

Belongs to the DEAD box helicase family. DbpA subfamily. As to quaternary structure, may interact with RNA helicases CshA and CshB.

It is found in the cytoplasm. The enzyme catalyses ATP + H2O = ADP + phosphate + H(+). With respect to regulation, ATPase activity is stimulated by interaction with RNA. Its function is as follows. DEAD-box RNA helicase involved in the assembly of the 50S ribosomal subunit. Has an RNA-dependent ATPase activity, which is specific for 23S rRNA, and a 3' to 5' RNA helicase activity that uses the energy of ATP hydrolysis to destabilize and unwind short rRNA duplexes. This is ATP-dependent RNA helicase DbpA from Bacillus subtilis (strain 168).